Reading from the N-terminus, the 267-residue chain is NAD kinase 2 (267 aa).

The Proton acceptor role is filled by aspartate 52. Residues 52 to 53 (DA), 124 to 125 (NE), arginine 151, aspartate 153, 164 to 169 (TAYNKS), and alanine 188 contribute to the NAD(+) site.

The protein belongs to the NAD kinase family. Requires a divalent metal cation as cofactor.

It localises to the cytoplasm. It carries out the reaction NAD(+) + ATP = ADP + NADP(+) + H(+). Functionally, involved in the regulation of the intracellular balance of NAD and NADP, and is a key enzyme in the biosynthesis of NADP. Catalyzes specifically the phosphorylation on 2'-hydroxyl of the adenosine moiety of NAD to yield NADP. This is NAD kinase 2 from Bacillus anthracis.